Reading from the N-terminus, the 242-residue chain is VIGGTNASPGEFPWQLSQQRQSGSWSHSCGASLLSSTSALSASHCVDGVLPNNIRVIAGLWQQSDTSGTQTANVDSYTMHENYGAGTASYSNDIAILHLATSISLGGNIQAAVLPANNNNDYAGTTCVISGWGRTDGTNNLPDILQKSSIPVITTAQCTAAMVGVGGANIWDNHICVQDPAGNTGACNGDSGGPLNCPDGGTRVVGVTSWVVSSGLGTCLPDYPSVYTRVSAYLGWIGDNSR.

The Peptidase S1 domain occupies 1-242; it reads VIGGTNASPG…YLGWIGDNSR (242 aa). The cysteines at positions 29 and 45 are disulfide-linked. Active-site charge relay system residues include H44 and D93. Disulfide bonds link C127–C197, C158–C176, and C187–C219. The active-site Charge relay system is S191.

This sequence belongs to the peptidase S1 family.

The chain is Fibrinolytic enzyme, isozyme C from Lumbricus rubellus (Humus earthworm).